We begin with the raw amino-acid sequence, 312 residues long: DNA-directed RNA polymerase subunit alpha (312 aa).

The tract at residues 1-226 is alpha N-terminal domain (alpha-NTD); it reads MIEFEKPIIT…EHLNLFTDLT (226 aa). Residues 243 to 312 form an alpha C-terminal domain (alpha-CTD) region; that stretch reads DEKVLDRTIE…DLGLGLKNDK (70 aa).

This sequence belongs to the RNA polymerase alpha chain family. In terms of assembly, homodimer. The RNAP catalytic core consists of 2 alpha, 1 beta, 1 beta' and 1 omega subunit. When a sigma factor is associated with the core the holoenzyme is formed, which can initiate transcription.

The enzyme catalyses RNA(n) + a ribonucleoside 5'-triphosphate = RNA(n+1) + diphosphate. Functionally, DNA-dependent RNA polymerase catalyzes the transcription of DNA into RNA using the four ribonucleoside triphosphates as substrates. This chain is DNA-directed RNA polymerase subunit alpha, found in Streptococcus mutans serotype c (strain ATCC 700610 / UA159).